A 474-amino-acid chain; its full sequence is ATP synthase subunit beta (474 aa).

153–160 (GGAGVGKT) contributes to the ATP binding site.

The protein belongs to the ATPase alpha/beta chains family. In terms of assembly, F-type ATPases have 2 components, CF(1) - the catalytic core - and CF(0) - the membrane proton channel. CF(1) has five subunits: alpha(3), beta(3), gamma(1), delta(1), epsilon(1). CF(0) has three main subunits: a(1), b(2) and c(9-12). The alpha and beta chains form an alternating ring which encloses part of the gamma chain. CF(1) is attached to CF(0) by a central stalk formed by the gamma and epsilon chains, while a peripheral stalk is formed by the delta and b chains.

Its subcellular location is the cell inner membrane. The enzyme catalyses ATP + H2O + 4 H(+)(in) = ADP + phosphate + 5 H(+)(out). Its function is as follows. Produces ATP from ADP in the presence of a proton gradient across the membrane. The catalytic sites are hosted primarily by the beta subunits. The chain is ATP synthase subunit beta from Neorickettsia sennetsu (strain ATCC VR-367 / Miyayama) (Ehrlichia sennetsu).